We begin with the raw amino-acid sequence, 256 residues long: 5-oxoprolinase subunit A (256 aa).

Belongs to the LamB/PxpA family. Forms a complex composed of PxpA, PxpB and PxpC.

The enzyme catalyses 5-oxo-L-proline + ATP + 2 H2O = L-glutamate + ADP + phosphate + H(+). Its function is as follows. Catalyzes the cleavage of 5-oxoproline to form L-glutamate coupled to the hydrolysis of ATP to ADP and inorganic phosphate. This chain is 5-oxoprolinase subunit A, found in Azoarcus sp. (strain BH72).